An 87-amino-acid chain; its full sequence is UPF0473 protein PTH_1066 (87 aa).

It belongs to the UPF0473 family.

The sequence is that of UPF0473 protein PTH_1066 from Pelotomaculum thermopropionicum (strain DSM 13744 / JCM 10971 / SI).